The following is a 374-amino-acid chain: Phosphate-binding protein PstS 1 (374 aa).

A signal peptide spans 1-23 (MKIRLHTLLAVLTAAPLLLAAAG). Cys-24 carries N-palmitoyl cysteine lipidation. Cys-24 carries S-diacylglycerol cysteine lipidation. Residues 25–48 (GSKPPSGSPETGAGAGTVATTPAS) are disordered. Residues 58 to 60 (STL), Ser-88, Asp-106, and 189 to 191 (SGD) each bind phosphate.

This sequence belongs to the PstS family. In terms of assembly, the complex is composed of two ATP-binding proteins (PstB), two transmembrane proteins (PstC and PstA) and a solute-binding protein (PstS).

It localises to the cell membrane. Its function is as follows. Part of the ABC transporter complex PstSACB involved in phosphate import. This chain is Phosphate-binding protein PstS 1 (pstS1), found in Mycobacterium tuberculosis (strain CDC 1551 / Oshkosh).